Consider the following 660-residue polypeptide: tRNA 5-methylaminomethyl-2-thiouridine biosynthesis bifunctional protein MnmC (660 aa).

The interval 1–235 (MTITRHARID…KWEVLRGAFI (235 aa)) is tRNA (mnm(5)s(2)U34)-methyltransferase. The interval 266–660 (IGAGLAGCAT…LRGLIRGGGK (395 aa)) is FAD-dependent cmnm(5)s(2)U34 oxidoreductase.

It in the N-terminal section; belongs to the methyltransferase superfamily. tRNA (mnm(5)s(2)U34)-methyltransferase family. In the C-terminal section; belongs to the DAO family. It depends on FAD as a cofactor.

The protein localises to the cytoplasm. The enzyme catalyses 5-aminomethyl-2-thiouridine(34) in tRNA + S-adenosyl-L-methionine = 5-methylaminomethyl-2-thiouridine(34) in tRNA + S-adenosyl-L-homocysteine + H(+). Catalyzes the last two steps in the biosynthesis of 5-methylaminomethyl-2-thiouridine (mnm(5)s(2)U) at the wobble position (U34) in tRNA. Catalyzes the FAD-dependent demodification of cmnm(5)s(2)U34 to nm(5)s(2)U34, followed by the transfer of a methyl group from S-adenosyl-L-methionine to nm(5)s(2)U34, to form mnm(5)s(2)U34. This chain is tRNA 5-methylaminomethyl-2-thiouridine biosynthesis bifunctional protein MnmC, found in Pseudomonas syringae pv. tomato (strain ATCC BAA-871 / DC3000).